The following is a 199-amino-acid chain: Dephospho-CoA kinase (199 aa).

The 197-residue stretch at Ile-3–Ala-199 folds into the DPCK domain. Position 11–16 (Gly-11–Thr-16) interacts with ATP.

Belongs to the CoaE family.

The protein resides in the cytoplasm. The enzyme catalyses 3'-dephospho-CoA + ATP = ADP + CoA + H(+). It functions in the pathway cofactor biosynthesis; coenzyme A biosynthesis; CoA from (R)-pantothenate: step 5/5. Its function is as follows. Catalyzes the phosphorylation of the 3'-hydroxyl group of dephosphocoenzyme A to form coenzyme A. This is Dephospho-CoA kinase from Bradyrhizobium diazoefficiens (strain JCM 10833 / BCRC 13528 / IAM 13628 / NBRC 14792 / USDA 110).